Here is a 122-residue protein sequence, read N- to C-terminus: Copper metallothionein 1 (122 aa).

The tract at residues 1-35 (MACNCPPQKNTACCSTSEAQDKCTCQKGNCECKAC) is cys-rich copper-binding 1. The spacer B1 stretch occupies residues 36-50 (PNSTKTSESGGKAST). The cys-rich copper-binding 2 stretch occupies residues 51-72 (CNCGGSGEACTCPPGQCACDKC). The tract at residues 73–81 (PKKAKSVST) is spacer B2. Residues 82-103 (CGCGGSGAACSCPPGKCACDNC) are cys-rich copper-binding 3. Residues 104 to 113 (PKQAQEKVSS) form a spacer B3 region. The cys-rich copper-binding 4 stretch occupies residues 114-122 (CACSGSGAA).

Belongs to the metallothionein superfamily.

Its subcellular location is the cytoplasm. It is found in the cell cortex. In terms of biological role, copper metallothionein that protects the cell against copper toxicity by tightly chelating copper ions. Required for antioxidant-mediated growth rescue in the presence of fluconazole. Acts as a critical factors for lung colonization and virulence. In Cryptococcus neoformans var. grubii serotype A (strain H99 / ATCC 208821 / CBS 10515 / FGSC 9487) (Filobasidiella neoformans var. grubii), this protein is Copper metallothionein 1.